We begin with the raw amino-acid sequence, 239 residues long: Regulator of G-protein signaling 20 (239 aa).

The tract at residues 1 to 29 (MRTANGGPRARASPSASPADPGLPEGSER) is disordered. Over residues 8-19 (PRARASPSASPA) the composition is skewed to low complexity. The 117-residue stretch at 113–229 (SFDNLMVTPA…MNSTVYKDLL (117 aa)) folds into the RGS domain.

Forms a complex with G(alpha)z/i2 subunits and mu-opioid receptors; the formation of this complex results in mu-opioid receptor desensitization. Interacts with OPRM1. Fatty acylated. Heavily palmitoylated in the cysteine string motif. In terms of processing, N- and O-glycosylated in synapsomal membranes. Post-translationally, serine phosphorylated in synapsomal membranes. Sumoylated with SUMO1, SUMO2 and SUMO3. Sumoylation increases binding to the G-proteins, G(alpha)-i2 and G(z), and interaction with mu-opioid receptors.

The protein localises to the membrane. It localises to the nucleus. It is found in the cytoplasm. Its function is as follows. Inhibits signal transduction by increasing the GTPase activity of G protein alpha subunits thereby driving them into their inactive GDP-bound form. Binds selectively to G(z)-alpha and G(alpha)-i2 subunits, accelerates their GTPase activity and regulates their signaling activities. The G(z)-alpha activity is inhibited by the phosphorylation and palmitoylation of the G-protein. Negatively regulates mu-opioid receptor-mediated activation of the G-proteins. This chain is Regulator of G-protein signaling 20 (Rgs20), found in Mus musculus (Mouse).